A 396-amino-acid polypeptide reads, in one-letter code: Putative isochorismate synthase (396 aa).

It belongs to the isochorismate synthase family.

The enzyme catalyses chorismate = isochorismate. The protein operates within siderophore biosynthesis; amonabactin biosynthesis. Functionally, involved in the synthesis of amonabactin, a phenolate siderophore containing 2,3-dihydroxybenzoic acid (2,3-DHB). This is Putative isochorismate synthase (amoA) from Aeromonas hydrophila.